The following is a 385-amino-acid chain: Cytochrome b (385 aa).

The next 4 membrane-spanning stretches (helical) occupy residues 34 to 54 (FGSI…ILTM), 78 to 99 (WFIR…FIHI), 114 to 134 (WYSG…GYVL), and 179 to 199 (FLVL…THLL). Heme b contacts are provided by His-84 and His-98. The heme b site is built by His-183 and His-197. Residue His-202 participates in a ubiquinone binding. The next 4 membrane-spanning stretches (helical) occupy residues 227 to 247 (FKDI…STLF), 289 to 309 (LMGV…PFLI), 321 to 341 (FMQF…WLGA), and 348 to 368 (YTIM…FLFP).

It belongs to the cytochrome b family. The cytochrome bc1 complex contains 3 respiratory subunits (MT-CYB, CYC1 and UQCRFS1), 2 core proteins (UQCRC1 and UQCRC2) and probably 6 low-molecular weight proteins. The cofactor is heme b.

Its subcellular location is the mitochondrion inner membrane. In terms of biological role, component of the ubiquinol-cytochrome c reductase complex (complex III or cytochrome b-c1 complex) that is part of the mitochondrial respiratory chain. The b-c1 complex mediates electron transfer from ubiquinol to cytochrome c. Contributes to the generation of a proton gradient across the mitochondrial membrane that is then used for ATP synthesis. The protein is Cytochrome b (MT-CYB) of Myxine glutinosa (Atlantic hagfish).